We begin with the raw amino-acid sequence, 344 residues long: Ferredoxin--NADP reductase (344 aa).

7 residues coordinate FAD: aspartate 36, glutamine 44, tyrosine 49, valine 89, phenylalanine 127, aspartate 291, and threonine 332.

The protein belongs to the ferredoxin--NADP reductase type 2 family. Homodimer. It depends on FAD as a cofactor.

It carries out the reaction 2 reduced [2Fe-2S]-[ferredoxin] + NADP(+) + H(+) = 2 oxidized [2Fe-2S]-[ferredoxin] + NADPH. This is Ferredoxin--NADP reductase from Beijerinckia indica subsp. indica (strain ATCC 9039 / DSM 1715 / NCIMB 8712).